The sequence spans 237 residues: Ribonuclease 3 (237 aa).

One can recognise an RNase III domain in the interval 8 to 134; that stretch reads RSALLEKLGV…VIGAVYLDAG (127 aa). Glu-47 contacts Mg(2+). Residue Asp-51 is part of the active site. Residues Asp-120 and Glu-123 each coordinate Mg(2+). Residue Glu-123 is part of the active site. A DRBM domain is found at 161-229; the sequence is DPKTSLQEAA…ALSAWTALTN (69 aa).

The protein belongs to the ribonuclease III family. Homodimer. Requires Mg(2+) as cofactor.

It is found in the cytoplasm. It carries out the reaction Endonucleolytic cleavage to 5'-phosphomonoester.. Its function is as follows. Digests double-stranded RNA. Involved in the processing of primary rRNA transcript to yield the immediate precursors to the large and small rRNAs (23S and 16S). Processes some mRNAs, and tRNAs when they are encoded in the rRNA operon. Processes pre-crRNA and tracrRNA of type II CRISPR loci if present in the organism. In Leifsonia xyli subsp. xyli (strain CTCB07), this protein is Ribonuclease 3.